The chain runs to 400 residues: Iron(III) enterobactin esterase (400 aa).

Belongs to the Fes family. As to quaternary structure, monomer.

It localises to the cytoplasm. The enzyme catalyses Fe(III)-enterobactin + 3 H2O + H(+) = Fe(III)-[N-(2,3-dihydroxybenzoyl)-L-serine] + 2 N-(2,3-dihydroxybenzoyl)-L-serine. It carries out the reaction Fe(III)-enterobactin + H2O = Fe(III)-[N-(2,3-dihydroxybenzoyl)-L-serine]3 + H(+). It catalyses the reaction Fe(III)-[N-(2,3-dihydroxybenzoyl)-L-serine]3 + H2O + H(+) = Fe(III)-[N-(2,3-dihydroxybenzoyl)-L-serine]2 + N-(2,3-dihydroxybenzoyl)-L-serine. The catalysed reaction is Fe(III)-[N-(2,3-dihydroxybenzoyl)-L-serine]2 + H2O + H(+) = Fe(III)-[N-(2,3-dihydroxybenzoyl)-L-serine] + N-(2,3-dihydroxybenzoyl)-L-serine. The enzyme catalyses enterobactin + 3 H2O = 3 N-(2,3-dihydroxybenzoyl)-L-serine + 2 H(+). Inhibited by N-ethylmaleimide. Its function is as follows. Catalyzes the hydrolysis of ferric enterobactin (Fe-Ent). Is responsible for the release of iron from ferric enterobactin. Also catalyzes the hydrolysis of iron-free enterobactin (Ent). Cleavage of ferric enterobactin results in a mixture of three hydrolysis products, 2,3-dihydroxybenzoylserine (DHBS), the linear dimer (DHBS)2 and the linear trimer (DHBS)3, while cleavage of iron-free enterobactin yields only the monomer. Hydrolysis of ferric enterobactin is less efficient than hydrolysis of unliganded enterobactin. It also cleaves the aluminum (III) complex at a rate similar to the ferric complex. The polypeptide is Iron(III) enterobactin esterase (Escherichia coli (strain K12)).